The primary structure comprises 291 residues: MSALANHAFAKMNGIGNEIVVVDMRDSTAKVTPDDARAVASAQGGVPYDQLMVLQKPRLDGTEAFISIYNNDGSEAGACGNGMRCVVRRIFEKTGQATATFETAAGLLNAWQGPAPDLYTVDMGVPKFGWQDIPLAEEFRDTRYIELQIGPIDNPILHSPSVVSMGNPHAIFWVDDVNAYDLARFGPLLENHPIFPERANITLAHIVDRDHITIRTWERGAGLTRACGSAACATAVAAARLKRAERNVEITLPGGKLGIEWRERDDHVLMTGTATFEYEGNFDPALFAPAG.

3 residues coordinate substrate: Asn-17, Gln-50, and Asn-70. The Proton donor role is filled by Cys-79. Residues 80-81, Asn-167, Asn-200, and 218-219 each bind substrate; these read GN and ER. Catalysis depends on Cys-227, which acts as the Proton acceptor. Position 228-229 (228-229) interacts with substrate; sequence GS.

The protein belongs to the diaminopimelate epimerase family. As to quaternary structure, homodimer.

It is found in the cytoplasm. The enzyme catalyses (2S,6S)-2,6-diaminopimelate = meso-2,6-diaminopimelate. The protein operates within amino-acid biosynthesis; L-lysine biosynthesis via DAP pathway; DL-2,6-diaminopimelate from LL-2,6-diaminopimelate: step 1/1. Its function is as follows. Catalyzes the stereoinversion of LL-2,6-diaminopimelate (L,L-DAP) to meso-diaminopimelate (meso-DAP), a precursor of L-lysine and an essential component of the bacterial peptidoglycan. This is Diaminopimelate epimerase from Bradyrhizobium diazoefficiens (strain JCM 10833 / BCRC 13528 / IAM 13628 / NBRC 14792 / USDA 110).